The following is a 150-amino-acid chain: Macrodomain Ter protein (150 aa).

The protein belongs to the MatP family. As to quaternary structure, homodimer.

The protein localises to the cytoplasm. Functionally, required for spatial organization of the terminus region of the chromosome (Ter macrodomain) during the cell cycle. Prevents early segregation of duplicated Ter macrodomains during cell division. Binds specifically to matS, which is a 13 bp signature motif repeated within the Ter macrodomain. The polypeptide is Macrodomain Ter protein (Klebsiella pneumoniae (strain 342)).